The following is a 252-amino-acid chain: Triosephosphate isomerase (252 aa).

Substrate is bound at residue 10–12; that stretch reads NWK. H96 acts as the Electrophile in catalysis. Residue E168 is the Proton acceptor of the active site. Substrate contacts are provided by residues G174, S214, and 235–236; that span reads GG.

It belongs to the triosephosphate isomerase family. Homodimer.

The protein resides in the cytoplasm. It carries out the reaction D-glyceraldehyde 3-phosphate = dihydroxyacetone phosphate. Its pathway is carbohydrate biosynthesis; gluconeogenesis. It functions in the pathway carbohydrate degradation; glycolysis; D-glyceraldehyde 3-phosphate from glycerone phosphate: step 1/1. Involved in the gluconeogenesis. Catalyzes stereospecifically the conversion of dihydroxyacetone phosphate (DHAP) to D-glyceraldehyde-3-phosphate (G3P). In Streptococcus thermophilus (strain CNRZ 1066), this protein is Triosephosphate isomerase.